The chain runs to 67 residues: Lantibiotic Flvbeta.b (67 aa).

Residues 1–34 (MDNNTKLQKLYEQLAATGSEKELDAMLDENMAGA) constitute a propeptide, cleaved by FlvT. At S36 the chain carries 2,3-didehydroalanine (Ser); by FlvM2. 2,3-didehydrobutyrine; by FlvM2 occurs at positions 39 and 43. 3 consecutive cross-links (beta-methyllanthionine (Thr-Cys); by FlvM2) follow at residues 50–56 (TTGFDWC), 58–61 (TGAC), and 62–65 (TYSC).

In terms of processing, contains DL-beta-methyllanthionine, when coepressed in E.coli with the flavecin synthetase FlvM2.

The protein resides in the secreted. Lanthionine-containing peptide antibiotic (lantibiotic) only active on Gram-positive bacteria in synergy with Flvalpha.a. Is not active in absence of Flvalpha.a, which is encoded by the same operon than Flvbeta.b. The bactericidal activity of lantibiotics is based on depolarization of energized bacterial cytoplasmic membranes, initiated by the formation of aqueous transmembrane pores. The polypeptide is Lantibiotic Flvbeta.b (Ruminococcus flavefaciens).